A 794-amino-acid polypeptide reads, in one-letter code: Phosphoenolpyruvate synthase (794 aa).

Catalysis depends on His-422, which acts as the Tele-phosphohistidine intermediate. Substrate-binding residues include Arg-512, Arg-579, Glu-681, Gly-702, Ser-703, Asn-704, and Asp-705. A Mg(2+)-binding site is contributed by Glu-681. Asp-705 contacts Mg(2+). Cys-752 serves as the catalytic Proton donor.

The protein belongs to the PEP-utilizing enzyme family. Mg(2+) serves as cofactor.

The catalysed reaction is pyruvate + ATP + H2O = phosphoenolpyruvate + AMP + phosphate + 2 H(+). The protein operates within carbohydrate biosynthesis; gluconeogenesis. In terms of biological role, catalyzes the phosphorylation of pyruvate to phosphoenolpyruvate. The polypeptide is Phosphoenolpyruvate synthase (ppsA) (Neisseria meningitidis serogroup B (strain ATCC BAA-335 / MC58)).